The following is a 441-amino-acid chain: Deoxyguanosinetriphosphate triphosphohydrolase-like protein (441 aa).

Residues 62–255 (RLTHSLEAAQ…MELADDIAYG (194 aa)) form the HD domain.

It belongs to the dGTPase family. Type 2 subfamily.

This is Deoxyguanosinetriphosphate triphosphohydrolase-like protein (dgt) from Vibrio cholerae serotype O1 (strain ATCC 39541 / Classical Ogawa 395 / O395).